Reading from the N-terminus, the 537-residue chain is 2-isopropylmalate synthase (537 aa).

The Pyruvate carboxyltransferase domain maps to 8–269 (VLIFDTTLRD…YFNGYLGRAE (262 aa)). Residues Asp-17, His-208, His-210, and Asn-244 each coordinate Mn(2+). A regulatory domain region spans residues 408-537 (QLAGVQVSCG…QRAPLPAPAL (130 aa)).

The protein belongs to the alpha-IPM synthase/homocitrate synthase family. LeuA type 1 subfamily. In terms of assembly, homodimer. Mn(2+) is required as a cofactor.

It is found in the cytoplasm. It carries out the reaction 3-methyl-2-oxobutanoate + acetyl-CoA + H2O = (2S)-2-isopropylmalate + CoA + H(+). It participates in amino-acid biosynthesis; L-leucine biosynthesis; L-leucine from 3-methyl-2-oxobutanoate: step 1/4. Its function is as follows. Catalyzes the condensation of the acetyl group of acetyl-CoA with 3-methyl-2-oxobutanoate (2-ketoisovalerate) to form 3-carboxy-3-hydroxy-4-methylpentanoate (2-isopropylmalate). The chain is 2-isopropylmalate synthase from Synechococcus sp. (strain RCC307).